Here is a 184-residue protein sequence, read N- to C-terminus: Uroplakin-2 (184 aa).

A signal peptide spans 1–25; it reads MASTLPVQTLPLILILLAVLAPGTA. Positions 26–84 are excised as a propeptide; that stretch reads DFNISSLSGLLSPALTESLLIALPPCHLTGGNATLMVRRANDSKVVKSDFVVPPCRGRR. N-linked (GlcNAc...) asparagine glycosylation is found at Asn-28, Asn-57, and Asn-66. Residues 85–155 are Lumenal-facing; it reads ELVSVVDSGS…IGLGMARTGG (71 aa). The chain crosses the membrane as a helical span at residues 156 to 180; sequence MVVITVLLSVAMFLLVVGLIVALHW. Topologically, residues 181 to 184 are cytoplasmic; sequence DARK.

It belongs to the uroplakin-2 family. As to quaternary structure, interacts with uroplakin-1a (UPK1A).

The protein resides in the cell membrane. In terms of biological role, component of the asymmetric unit membrane (AUM); a highly specialized biomembrane elaborated by terminally differentiated urothelial cells. May play an important role in regulating the assembly of the AUM. This is Uroplakin-2 (Upk2) from Mus musculus (Mouse).